Consider the following 153-residue polypeptide: ORM1-like protein 3 (153 aa).

The tract at residues 1–17 (MNVGTAHSEVNPNTRVM) is important for ceramide level-sensing. Residues 1–21 (MNVGTAHSEVNPNTRVMNSRG) lie on the Cytoplasmic side of the membrane. The next 2 helical transmembrane spans lie at 22 to 44 (IWLS…PFVS) and 45 to 63 (VPVV…MYIF). The Cytoplasmic portion of the chain corresponds to 64–100 (LHTVKGTPFETPDQGKARLLTHWEQMDYGVQFTASRK). Residues 101–117 (FLTITPIVLYFLTSFYT) form a helical membrane-spanning segment. The Lumenal segment spans residues 118–121 (KYDQ). A helical membrane pass occupies residues 122-139 (IHFVLNTVSLMSVLIPKL). Position 137 is a hydroxyproline (Pro137). The Cytoplasmic segment spans residues 140–153 (PQLHGVRIFGINKY).

Belongs to the ORM family. In terms of assembly, ceramide-sensitive subunit of the serine palmitoyltransferase (SPT) complex, which is also composed of SPTLC1, SPTLC2/3 and SPTSSA/B. When hydroxylated at Pro-137, ubiquitinated via 'Lys-48'-linkage, leading to proteasomal degradation. In endothelial cells, ORMDL3 proteasomal degradation is controlled by the sphingosine 1-phosphate receptor signaling pathway. As to expression, widely expressed. Expressed in adult and fetal heart, brain, lung, liver, skeletal muscle and kidney. Expressed in adult pancreas and placenta and in fetal spleen and thymus.

The protein resides in the endoplasmic reticulum membrane. In terms of biological role, plays an essential role in the homeostatic regulation of sphingolipid de novo biosynthesis by modulating the activity of the serine palmitoyltransferase (SPT) in response to ceramide levels. When complexed to SPT, the binding of ceramides to its N-terminus stabilizes a conformation that block SPT substrate entry, hence preventing SPT catalytic activity. Through this mechanism, maintains ceramide levels at sufficient concentrations for the production of complex sphingolipids, but which prevents the accumulation of ceramides to levels that trigger apoptosis. This is ORM1-like protein 3 (ORMDL3) from Homo sapiens (Human).